Reading from the N-terminus, the 443-residue chain is Anamorsin homolog (443 aa).

The N-terminal SAM-like domain stretch occupies residues 136-301 (LSSAPRVLVL…AAGVADALSG (166 aa)). Residues 302–331 (NRGALPNGTAQTDGDDFIDESTLIDPTESY) form a linker region. [2Fe-2S] cluster-binding residues include Cys-341, Cys-348, Cys-351, and Cys-353. The interval 341-353 (CASRPKACPNCTC) is fe-S binding site A. Cys-380, Cys-383, Cys-391, and Cys-394 together coordinate [4Fe-4S] cluster. 2 short sequence motifs (cx2C motif) span residues 380 to 383 (CGNC) and 391 to 394 (CAGC). Residues 380-394 (CGNCYLGDAFRCAGC) are fe-S binding site B.

It belongs to the anamorsin family. As to quaternary structure, monomer. It depends on [2Fe-2S] cluster as a cofactor. [4Fe-4S] cluster serves as cofactor.

It is found in the cytoplasm. Its subcellular location is the mitochondrion intermembrane space. Functionally, component of the cytosolic iron-sulfur (Fe-S) protein assembly (CIA) machinery. Required for the maturation of extramitochondrial Fe-S proteins. Part of an electron transfer chain functioning in an early step of cytosolic Fe-S biogenesis, facilitating the de novo assembly of a [4Fe-4S] cluster on the cytosolic Fe-S scaffold complex. Electrons are transferred from NADPH via a FAD- and FMN-containing diflavin oxidoreductase. Together with the diflavin oxidoreductase, also required for the assembly of the diferric tyrosyl radical cofactor of ribonucleotide reductase (RNR), probably by providing electrons for reduction during radical cofactor maturation in the catalytic small subunit. The chain is Anamorsin homolog from Toxoplasma gondii (strain ATCC 50861 / VEG).